The primary structure comprises 355 residues: Protein DVR-1 (355 aa).

The N-terminal stretch at 1-15 (MFLVLLRACLLTLSL) is a signal peptide. Positions 16–240 (CSPAEDDGLV…PLQCRSRRKR (225 aa)) are excised as a propeptide. Residues asparagine 108, asparagine 179, and asparagine 296 are each glycosylated (N-linked (GlcNAc...) asparagine). Intrachain disulfides connect cysteine 254–cysteine 320, cysteine 283–cysteine 352, and cysteine 287–cysteine 354.

It belongs to the TGF-beta family. In terms of assembly, homodimer. As to expression, abundant in ovaries and eggs, and equally distributed among all blastomeres.

Its subcellular location is the secreted. Functionally, serves to facilitate the differentiation of either mesoderm or endoderm either as a cofactor in an instructive signal or by providing permissive environment. This chain is Protein DVR-1 (dvr1), found in Danio rerio (Zebrafish).